The primary structure comprises 458 residues: Argininosuccinate lyase (458 aa).

The protein belongs to the lyase 1 family. Argininosuccinate lyase subfamily.

It is found in the cytoplasm. The catalysed reaction is 2-(N(omega)-L-arginino)succinate = fumarate + L-arginine. It participates in amino-acid biosynthesis; L-arginine biosynthesis; L-arginine from L-ornithine and carbamoyl phosphate: step 3/3. The chain is Argininosuccinate lyase from Actinobacillus pleuropneumoniae serotype 5b (strain L20).